We begin with the raw amino-acid sequence, 333 residues long: Fructose-1,6-bisphosphatase class 1 (333 aa).

Positions 89, 110, 112, and 113 each coordinate Mg(2+). Residues 113 to 116 (DGSS), asparagine 206, tyrosine 239, 257 to 259 (YLY), and lysine 269 each bind substrate. Glutamate 275 serves as a coordination point for Mg(2+).

Belongs to the FBPase class 1 family. Homotetramer. Mg(2+) serves as cofactor.

It localises to the cytoplasm. The catalysed reaction is beta-D-fructose 1,6-bisphosphate + H2O = beta-D-fructose 6-phosphate + phosphate. The protein operates within carbohydrate biosynthesis; gluconeogenesis. This is Fructose-1,6-bisphosphatase class 1 from Sodalis glossinidius (strain morsitans).